The primary structure comprises 361 residues: Phosphoserine aminotransferase (361 aa).

Arg42 provides a ligand contact to L-glutamate. Residues 76 to 77, Trp102, Thr152, Asp172, and Gln195 each bind pyridoxal 5'-phosphate; that span reads AT. Lys196 bears the N6-(pyridoxal phosphate)lysine mark. A pyridoxal 5'-phosphate-binding site is contributed by 237–238; that stretch reads NT.

The protein belongs to the class-V pyridoxal-phosphate-dependent aminotransferase family. SerC subfamily. Homodimer. Pyridoxal 5'-phosphate is required as a cofactor.

The protein resides in the cytoplasm. The catalysed reaction is O-phospho-L-serine + 2-oxoglutarate = 3-phosphooxypyruvate + L-glutamate. It carries out the reaction 4-(phosphooxy)-L-threonine + 2-oxoglutarate = (R)-3-hydroxy-2-oxo-4-phosphooxybutanoate + L-glutamate. The protein operates within amino-acid biosynthesis; L-serine biosynthesis; L-serine from 3-phospho-D-glycerate: step 2/3. It participates in cofactor biosynthesis; pyridoxine 5'-phosphate biosynthesis; pyridoxine 5'-phosphate from D-erythrose 4-phosphate: step 3/5. In terms of biological role, catalyzes the reversible conversion of 3-phosphohydroxypyruvate to phosphoserine and of 3-hydroxy-2-oxo-4-phosphonooxybutanoate to phosphohydroxythreonine. The protein is Phosphoserine aminotransferase of Stenotrophomonas maltophilia (strain R551-3).